We begin with the raw amino-acid sequence, 223 residues long: Ribose-5-phosphate isomerase A (223 aa).

Substrate contacts are provided by residues 29–32 (TGST), 82–85 (DGAD), and 95–98 (KGGG). The active-site Proton acceptor is Glu104. Lys122 serves as a coordination point for substrate.

The protein belongs to the ribose 5-phosphate isomerase family. In terms of assembly, homodimer.

The enzyme catalyses aldehydo-D-ribose 5-phosphate = D-ribulose 5-phosphate. It functions in the pathway carbohydrate degradation; pentose phosphate pathway; D-ribose 5-phosphate from D-ribulose 5-phosphate (non-oxidative stage): step 1/1. Catalyzes the reversible conversion of ribose-5-phosphate to ribulose 5-phosphate. This is Ribose-5-phosphate isomerase A from Neisseria meningitidis serogroup C (strain 053442).